The primary structure comprises 1508 residues: MGQEPRTLPPSPNWYCARCSDAVPGGLFGFAARTSVFLVRVGPGAGESPGTPPFRVIGELVGHTERVSGFTFSHHPGQYNLCATSSDDGTVKIWDVETKTVVTEHALHQHTISTLHWSPRVKDLIVSGDEKGVVFCYWFNRNDSQHLFIEPRTIFCLTCSPHHEDLVAIGYKDGIVVIIDISKKGEVIHRLRGHDDEIHSIAWCPLPGEDCLSINQEETSEEAEITNGNAVAQAPVTKGCYLATGSKDQTIRIWSCSRGRGVMILKLPFLKRRGGGIDPTVKERLWLTLHWPSNQPTQLVSSCFGGELLQWDLTQSWRRKYTLFSASSEGQNHSRIVFNLCPLQTEDDKQLLLSTSMDRDVKCWDIATLECSWTLPSLGGFAYSLAFSSVDIGSLAIGVGDGMIRVWNTLSIKNNYDVKNFWQGVKSKVTALCWHPTKEGCLAFGTDDGKVGLYDTYSNKPPQISSTYHKKTVYTLAWGPPVPPMSLGGEGDRPSLALYSCGGEGIVLQHNPWKLSGEAFDINKLIRDTNSIKYKLPVHTEISWKADGKIMALGNEDGSIEIFQIPNLKLICTIQQHHKLVNTISWHHEHGSQPELSYLMASGSNNAVIYVHNLKTVIESSPESPVTITEPYRTLSGHTAKITSVAWSPHHDGRLVSASYDGTAQVWDALREEPLCNFRGHRGRLLCVAWSPLDPDCIYSGADDFCVHKWLTSMQDHSRPPQGKKSIELEKKRLSQPKAKPKKKKKPTLRTPVKLESIDGNEEESMKENSGPVENGVSDQEGEEQAREPELPCGLAPAVSREPVICTPVSSGFEKSKVTINNKVILLKKEPPKEKPETLIKKRKARSLLPLSTSLDHRSKEELHQDCLVLATAKHSRELNEDVSADVEERFHLGLFTDRATLYRMIDIEGKGHLENGHPELFHQLMLWKGDLKGVLQTAAERGELTDNLVAMAPAAGYHVWLWAVEAFAKQLCFQDQYVKAASHLLSIHKVYEAVELLKSNHFYREAIAIAKARLRPEDPVLKDLYLSWGTVLERDGHYAVAAKCYLGATCAYDAAKVLAKKGDAASLRTAAELAAIVGEDELSASLALRCAQELLLANNWVGAQEALQLHESLQGQRLVFCLLELLSRHLEEKQLSEGKSSSSYHTWNTGTEGPFVERVTAVWKSIFSLDTPEQYQEAFQKLQNIKYPSATNNTPAKQLLLHICHDLTLAVLSQQMASWDEAVQALLRAVVRSYDSGSFTIMQEVYSAFLPDGCDHLRDKLGDHQSPATPAFKSLEAFFLYGRLYEFWWSLSRPCPNSSVWVRAGHRTLSVEPSQQLDTASTEETDPETSQPEPNRPSELDLRLTEEGERMLSTFKELFSEKHASLQNSQRTVAEVQETLAEMIRQHQKSQLCKSTANGPDKNEPEVEAEQPLCSSQSQCKEEKNEPLSLPELTKRLTEANQRMAKFPESIKAWPFPDVLECCLVLLLIRSHFPGCLAQEMQQQAQELLQKYGNTKTYRRHCQTFCM.

Residues 1–124 (MGQEPRTLPP…LHWSPRVKDL (124 aa)) are important for interaction with U1 snRNA. Residues 13–15 (NWY) form an interaction with U4 snRNA region. Residue Ser48 is modified to Phosphoserine. Thr51 carries the phosphothreonine modification. 11 WD repeats span residues 62 to 104 (GHTE…VVTE), 107 to 148 (LHQH…QHLF), 150 to 189 (EPRT…EVIH), 193 to 264 (GHDD…GVMI), 280 to 321 (TVKE…RRKY), 333 to 374 (HSRI…CSWT), 377 to 417 (SLGG…NNYD), 424 to 464 (GVKS…PPQI), 468 to 509 (YHKK…IVLQ), 533 to 573 (KYKL…LICT), and 576 to 622 (QHHK…ESSP). The residue at position 624 (Ser624) is a Phosphoserine. WD repeat units lie at residues 637 to 677 (GHTA…PLCN) and 680 to 720 (GHRG…HSRP). The tract at residues 715 to 790 (QDHSRPPQGK…EGEEQAREPE (76 aa)) is disordered. The segment covering 739–748 (AKPKKKKKPT) has biased composition (basic residues). The residue at position 751 (Thr751) is a Phosphothreonine. Residue Lys754 forms a Glycyl lysine isopeptide (Lys-Gly) (interchain with G-Cter in SUMO2) linkage. Ser757, Ser770, Ser778, and Ser847 each carry phosphoserine. Disordered regions lie at residues 1313-1343 (EPSQ…ELDL) and 1389-1428 (QKSQ…KNEP). Residues 1362-1393 (EKHASLQNSQRTVAEVQETLAEMIRQHQKSQL) are a coiled coil. A compositionally biased stretch (polar residues) spans 1390-1399 (KSQLCKSTAN).

This sequence belongs to the WD repeat gemin-5 family. Part of the core SMN complex that contains SMN1, GEMIN2/SIP1, DDX20/GEMIN3, GEMIN4, GEMIN5, GEMIN6, GEMIN7, GEMIN8 and STRAP/UNRIP. Part of the SMN-Sm complex that contains SMN1, GEMIN2/SIP1, DDX20/GEMIN3, GEMIN4, GEMIN5, GEMIN6, GEMIN7, GEMIN8, STRAP/UNRIP and the Sm proteins SNRPB, SNRPD1, SNRPD2, SNRPD3, SNRPE, SNRPF and SNRPG. Interacts with GEMIN2; the interaction is direct. Interacts with SMN1, SNRPB, SNRPD1, SNRPD2, SNRPD3 and SNRPE; the interaction is direct. Interacts with cytosolic DDX20/GEMIN3 and GEMIN4. Interacts with SNRNP70 and HNRNPU. Identified in a complex with 80S ribosomes; binds to the 60S large ribosomal subunit. Interacts with the ribosomal subunits RPL3 and RPL4.

The protein resides in the nucleus. Its subcellular location is the nucleoplasm. It is found in the gem. The protein localises to the cytoplasm. Functionally, the SMN complex catalyzes the assembly of small nuclear ribonucleoproteins (snRNPs), the building blocks of the spliceosome, and thereby plays an important role in the splicing of cellular pre-mRNAs. Most spliceosomal snRNPs contain a common set of Sm proteins SNRPB, SNRPD1, SNRPD2, SNRPD3, SNRPE, SNRPF and SNRPG that assemble in a heptameric protein ring on the Sm site of the small nuclear RNA to form the core snRNP (Sm core). In the cytosol, the Sm proteins SNRPD1, SNRPD2, SNRPE, SNRPF and SNRPG are trapped in an inactive 6S pICln-Sm complex by the chaperone CLNS1A that controls the assembly of the core snRNP. To assemble core snRNPs, the SMN complex accepts the trapped 5Sm proteins from CLNS1A forming an intermediate. Binding of snRNA inside 5Sm ultimately triggers eviction of the SMN complex, thereby allowing binding of SNRPD3 and SNRPB to complete assembly of the core snRNP. Within the SMN complex, GEMIN5 recognizes and delivers the small nuclear RNAs (snRNAs) to the SMN complex. Binds to the 7-methylguanosine cap of RNA molecules. Binds to the 3'-UTR of SMN1 mRNA and regulates its translation; does not affect mRNA stability. May play a role in the regulation of protein synthesis via its interaction with ribosomes. This Homo sapiens (Human) protein is Gem-associated protein 5 (GEMIN5).